The primary structure comprises 292 residues: Tetratricopeptide repeat protein 1 (292 aa).

The disordered stretch occupies residues 23-125; the sequence is TQEAECAGPP…STRLKEEGNE (103 aa). Composition is skewed to basic and acidic residues over residues 45 to 55 and 75 to 85; these read LLRDDEAHLQE and GADKVENKSNE. Ser-83 and Ser-90 each carry phosphoserine. The segment covering 99–125 has biased composition (basic and acidic residues); the sequence is ELEKNMSDEEKQKRREESTRLKEEGNE. TPR repeat units follow at residues 116 to 149, 155 to 188, and 189 to 222; these read STRLKEEGNEQFKKGDYIEAESSYSRALEMCPSC, SILFSNRAAARMKQDKKEMAINDCSKAIQLNPSY, and IRAILRRAELYEKTDKLDEALEDYKSILEKDPSI.

In terms of assembly, interacts with the GAP domain of NF1. Interacts (via TPR repeats) with HSP90AA1 and HSPA8.

The chain is Tetratricopeptide repeat protein 1 (TTC1) from Homo sapiens (Human).